The chain runs to 313 residues: Transcription initiation factor IIB 2 (313 aa).

A TFIIB-type zinc finger spans residues 13–44; it reads APKRCPECHSEHLIRDYEHGELICADCGAVIE. Zn(2+) contacts are provided by cysteine 17, cysteine 20, cysteine 36, and cysteine 39. 2 repeat units span residues 130 to 213 and 224 to 305.

This sequence belongs to the TFIIB family.

Stabilizes TBP binding to an archaeal box-A promoter. Also responsible for recruiting RNA polymerase II to the pre-initiation complex (DNA-TBP-TFIIB). In Thermoplasma volcanium (strain ATCC 51530 / DSM 4299 / JCM 9571 / NBRC 15438 / GSS1), this protein is Transcription initiation factor IIB 2.